The following is a 132-amino-acid chain: uncharacterized protein (132 aa).

A run of 4 helical transmembrane segments spans residues 15–37 (FPEY…LLLY), 49–71 (AFIP…LRLF), 81–103 (VILT…LALV), and 110–129 (LAAT…MAFV).

The protein localises to the cell membrane. This is an uncharacterized protein from Archaeoglobus fulgidus (strain ATCC 49558 / DSM 4304 / JCM 9628 / NBRC 100126 / VC-16).